A 53-amino-acid chain; its full sequence is UPF0391 membrane protein Patl_1732 (53 aa).

The next 2 membrane-spanning stretches (helical) occupy residues 4–24 (WAVI…GGIA) and 28–48 (AGIA…SVVM).

This sequence belongs to the UPF0391 family.

Its subcellular location is the cell membrane. This Pseudoalteromonas atlantica (strain T6c / ATCC BAA-1087) protein is UPF0391 membrane protein Patl_1732.